The primary structure comprises 142 residues: Glia maturation factor beta (142 aa).

Serine 2 bears the N-acetylserine mark. Residues 4-139 (SLVVCDVAED…TEEWLREKLG (136 aa)) form the ADF-H domain.

This sequence belongs to the actin-binding proteins ADF family. GMF subfamily. In terms of processing, phosphorylated; stimulated by phorbol ester.

Its function is as follows. This protein causes differentiation of brain cells, stimulation of neural regeneration, and inhibition of proliferation of tumor cells. The chain is Glia maturation factor beta (GMFB) from Homo sapiens (Human).